We begin with the raw amino-acid sequence, 255 residues long: H-2 class II histocompatibility antigen, E-D alpha chain (255 aa).

The N-terminal stretch at 1-25 (MATIGALVLRFFFIAVLMSSQKSWA) is a signal peptide. The segment at 26–109 (IKEEHTIIQA…ERSNNTPDAN (84 aa)) is alpha-1. At 26–216 (IKEEHTIIQA…EKTLLPETKE (191 aa)) the chain is on the extracellular side. The alpha-2 stretch occupies residues 110-203 (VAPEVTVLSR…GLEEPLRKTW (94 aa)). An Ig-like C1-type domain is found at 112–204 (PEVTVLSRSP…LEEPLRKTWE (93 aa)). Residues Cys-132 and Cys-188 are joined by a disulfide bond. A glycan (N-linked (GlcNAc...) asparagine) is linked at Asn-143. A connecting peptide region spans residues 204–216 (EFEEKTLLPETKE). Residues 217 to 242 (NVMCALGLFVGLVGIVVGIILIMKGI) form a helical membrane-spanning segment. Over 243–255 (KKRNVVERRQGAL) the chain is Cytoplasmic.

Belongs to the MHC class II family.

Its subcellular location is the membrane. The polypeptide is H-2 class II histocompatibility antigen, E-D alpha chain (H2-Ea) (Mus musculus (Mouse)).